Here is a 487-residue protein sequence, read N- to C-terminus: 4-alpha-glucanotransferase (487 aa).

Belongs to the disproportionating enzyme family.

The protein resides in the cytoplasm. The enzyme catalyses Transfers a segment of a (1-&gt;4)-alpha-D-glucan to a new position in an acceptor, which may be glucose or a (1-&gt;4)-alpha-D-glucan.. In terms of biological role, catalyzes a disproportionation reaction in which single or multiple glucose units from oligosaccharides are transferred to the 4-hydroxyl group of acceptor sugars. Glucose, maltose and maltotriose can act as acceptor, whereas of the three only maltotriose can act as donor. In Clostridium butyricum, this protein is 4-alpha-glucanotransferase (malQ).